The following is a 1744-amino-acid chain: Complement C4-A (1744 aa).

The signal sequence occupies residues 1–19 (MRLLWGLIWASSFFTLSLQ). Cys-68 and Cys-97 are oxidised to a cystine. Residue Asn-226 is glycosylated (N-linked (GlcNAc...) asparagine). Cysteines 635 and 669 form a disulfide. Residues 676–679 (RKKR) constitute a propeptide that is removed on maturation. Intrachain disulfides connect Cys-702-Cys-728, Cys-703-Cys-735, and Cys-716-Cys-736. The region spanning 702-736 (CCQDGVTRLPMMRSCEQRAARVQQPDCREPFLSCC) is the Anaphylatoxin-like domain. The N-linked (GlcNAc...) asparagine glycan is linked to Asn-862. Position 918 is a phosphoserine; by FAM20C (Ser-918). Positions 1010-1013 (CGEQ) form a cross-link, isoglutamyl cysteine thioester (Cys-Gln). The O-linked (GalNAc...) threonine glycan is linked to Thr-1244. Asn-1328 carries an N-linked (GlcNAc...) (complex) asparagine glycan. An N-linked (GlcNAc...) asparagine glycan is attached at Asn-1391. Tyr-1417, Tyr-1420, and Tyr-1422 each carry sulfotyrosine. Residues 1447–1453 (RRNRRRR) constitute a propeptide that is removed on maturation. Disulfide bonds link Cys-1471-Cys-1535, Cys-1583-Cys-1588, Cys-1595-Cys-1673, Cys-1618-Cys-1742, and Cys-1718-Cys-1727. The region spanning 1595–1742 (CPRQRRALER…FLQEYGTQGC (148 aa)) is the NTR domain.

Complement circulates in blood as a disulfide-linked trimer of an alpha, beta and gamma chain. In terms of assembly, complement C4b is composed of complement C4b-A, complement C4 beta and complement C4 gamma chains that are associated via disulfide bonds. Non-enzymatic component of the C3 convertase, also named C4bC2b, composed of the serine protease complement C2b (C2), as well as complement C4b. Non-enzymatic component of the C5 convertase, also named C4bC2bC3b, composed of the serine protease complement C2b (C2), complement C3b, as well as complement C4b. Post-translationally, prior to secretion, the single-chain precursor is enzymatically cleaved by plasminogen (PLG) to yield non-identical chains alpha, beta and gamma. During activation of the complement systems, the alpha chain is cleaved into C4a and C4b by different proteases depending on the complement pathway: C4b stays linked to the beta and gamma chains, while C4a is released in the plasma. The alpha chain is cleaved by C1S to generate C4a and C4b following activation by the classical complement system. The alpha chain is cleaved to generate C4a and C4b by MASP2 following activation by the lectin complement system. The alpha chain is cleaved by GZMK to generate C4a and C4b following activation by the GZMK complement system. Further degradation of C4b by C1 into the inactive fragments C4c and C4d blocks the generation of C3 convertase. The proteolytic cleavages often are incomplete so that many structural forms can be found in plasma. In terms of processing, upon activation, the internal thioester bond reacts with carbohydrate antigens on the target surface to form amide or ester bonds, leading to covalent association with the surface of pathogens. Ser-1236 of complement C4b interacts with complement C3b via a thioester linkage. Post-translationally, N- and O-glycosylated. O-glycosylated with a core 1 or possibly core 8 glycan. Complement component C4 is expressed at highest levels in the liver, at moderate levels in the adrenal cortex, adrenal medulla, thyroid gland, and the kidney, and at lowest levels in the heart, ovary, small intestine, thymus, pancreas and spleen. The extra-hepatic sites of expression may be important for the local protection and inflammatory response.

It is found in the secreted. The protein resides in the synapse. The protein localises to the cell projection. Its subcellular location is the axon. It localises to the dendrite. It is found in the cell surface. With respect to regulation, specifically inhibited by nanobody hC4Nb8, inhibiting the classical complement pathway. Specifically inhibited by NbB5, NbE11 and NbH9 nanobodies, and to a lesser extent by NbH11 and NbE3 nanobodies. In terms of biological role, precursor of non-enzymatic components of the classical, lectin and GZMK complement pathways, which consist in a cascade of proteins that leads to phagocytosis and breakdown of pathogens and signaling that strengthens the adaptive immune system. Its function is as follows. Non-enzymatic component of C3 and C5 convertases. Generated following cleavage by complement proteases (C1S, MASP2 or GZMK, depending on the complement pathway), it covalently attaches to the surface of pathogens, where it acts as an opsonin that marks the surface of antigens for removal. It then recruits the serine protease complement C2b to form the C3 and C5 convertases, which cleave and activate C3 and C5, respectively, the next components of the complement pathways. Complement C4b-A isotype is responsible for effective binding to form amide bonds with immune aggregates or protein antigens, while complement C4b-B isotype catalyzes the transacylation of the thioester carbonyl group to form ester bonds with carbohydrate antigens. Putative humoral mediator released following cleavage by complement proteases (C1S, MASP2 or GZMK, depending on the complement pathway). While it is strongly similar to anaphylatoxins, its role is unclear. Was reported to act as a mediator of local inflammatory process; however these effects were probably due to contamination with C3a and/C5a anaphylatoxins in biological assays. The chain is Complement C4-A from Homo sapiens (Human).